Here is a 26-residue protein sequence, read N- to C-terminus: Melittin (26 aa).

N-formylglycine; partial is present on glycine 1. Glutamate 26 bears the Glutamic acid 1-amide mark.

This sequence belongs to the melittin family. In terms of assembly, monomer (in solution and for integration into membranes), homotetramer (in solution and potentially as a toroidal pore in membranes), and potenially homomultimer (as a toroidal pore in membranes). As to expression, expressed by the venom gland.

The protein resides in the secreted. The protein localises to the target cell membrane. Main toxin of bee venom with strong hemolytic activity and antimicrobial activity. It has enhancing effects on bee venom phospholipase A2 activity. This amphipathic toxin binds to negatively charged membrane surface and forms pore by inserting into lipid bilayers inducing the leakage of ions and molecules and the enhancement of permeability that ultimately leads to cell lysis. It acts as a voltage-gated pore with higher selectivity for anions over cations. The ion conductance has been shown to be voltage-dependent. Self-association of melittin in membranes is promoted by high ionic strength, but not by the presence of negatively charged lipids. In vivo, intradermal injection into healthy human volunteers produce sharp pain sensation and an inflammatory response. It produces pain by activating primary nociceptor cells directly and indirectly due to its ability to activate plasma membrane phospholipase A2 and its pore-forming activity. The protein is Melittin (MELT) of Apis dorsata (Giant honeybee).